We begin with the raw amino-acid sequence, 341 residues long: UDP-N-acetylenolpyruvoylglucosamine reductase (341 aa).

Residues 13 to 185 (FGVEQSCLSM…TAVGLRLPKA (173 aa)) form the FAD-binding PCMH-type domain. Residue Arg-161 is part of the active site. Ser-231 serves as the catalytic Proton donor. Glu-327 is an active-site residue.

This sequence belongs to the MurB family. FAD serves as cofactor.

Its subcellular location is the cytoplasm. It carries out the reaction UDP-N-acetyl-alpha-D-muramate + NADP(+) = UDP-N-acetyl-3-O-(1-carboxyvinyl)-alpha-D-glucosamine + NADPH + H(+). It functions in the pathway cell wall biogenesis; peptidoglycan biosynthesis. Its function is as follows. Cell wall formation. This chain is UDP-N-acetylenolpyruvoylglucosamine reductase, found in Shewanella sp. (strain MR-4).